We begin with the raw amino-acid sequence, 85 residues long: MAHKKAAGSSRNGRDSESKRLGVKLFGGQAATAGNIIVRQRGTKFHAGSGVGIGKDHTLFALNDGVIKFETKGPKNRKFVSVVSA.

Positions 1 to 21 are disordered; it reads MAHKKAAGSSRNGRDSESKRL.

This sequence belongs to the bacterial ribosomal protein bL27 family.

This is Large ribosomal subunit protein bL27 from Chromohalobacter salexigens (strain ATCC BAA-138 / DSM 3043 / CIP 106854 / NCIMB 13768 / 1H11).